We begin with the raw amino-acid sequence, 427 residues long: Adenylosuccinate synthetase (427 aa).

GTP is bound by residues 12 to 18 and 40 to 42; these read GDEGKGK and GHT. Aspartate 13 serves as the catalytic Proton acceptor. 2 residues coordinate Mg(2+): aspartate 13 and glycine 40. Residues 13 to 16, 38 to 41, threonine 128, arginine 142, glutamine 223, threonine 238, and arginine 302 each bind IMP; these read DEGK and NAGH. The Proton donor role is filled by histidine 41. 298-304 is a binding site for substrate; that stretch reads TTTGRPR. Residues arginine 304, 330 to 332, and 412 to 414 contribute to the GTP site; these read SID and SVG.

It belongs to the adenylosuccinate synthetase family. Homodimer. Requires Mg(2+) as cofactor.

The protein resides in the cytoplasm. It catalyses the reaction IMP + L-aspartate + GTP = N(6)-(1,2-dicarboxyethyl)-AMP + GDP + phosphate + 2 H(+). It functions in the pathway purine metabolism; AMP biosynthesis via de novo pathway; AMP from IMP: step 1/2. Functionally, plays an important role in the de novo pathway of purine nucleotide biosynthesis. Catalyzes the first committed step in the biosynthesis of AMP from IMP. The chain is Adenylosuccinate synthetase from Staphylococcus aureus (strain N315).